A 208-amino-acid chain; its full sequence is Thymidylate kinase (208 aa).

10-17 (GPEGSGKT) contributes to the ATP binding site.

Belongs to the thymidylate kinase family.

The enzyme catalyses dTMP + ATP = dTDP + ADP. Its function is as follows. Phosphorylation of dTMP to form dTDP in both de novo and salvage pathways of dTTP synthesis. In Bacillus anthracis, this protein is Thymidylate kinase.